We begin with the raw amino-acid sequence, 495 residues long: Glucose-6-phosphate 1-dehydrogenase (495 aa).

The residue at position 1 (S1) is an N-acetylserine. NADP(+) contacts are provided by residues 15–22 (GASGDLAR), R49, and K149. D-glucose 6-phosphate contacts are provided by residues K149, 179-183 (HYLGK), E217, and D236. Catalysis depends on H241, which acts as the Proton acceptor. Position 332 (R332) interacts with NADP(+). K335 contacts D-glucose 6-phosphate. NADP(+) is bound by residues K341, R345, and R367. Q369 contributes to the D-glucose 6-phosphate binding site. Residues 375–377 (YLK), 395–397 (DLT), and K463 contribute to the NADP(+) site.

This sequence belongs to the glucose-6-phosphate dehydrogenase family.

It carries out the reaction D-glucose 6-phosphate + NADP(+) = 6-phospho-D-glucono-1,5-lactone + NADPH + H(+). It participates in carbohydrate degradation; pentose phosphate pathway; D-ribulose 5-phosphate from D-glucose 6-phosphate (oxidative stage): step 1/3. Catalyzes the rate-limiting step of the oxidative pentose-phosphate pathway, which represents a route for the dissimilation of carbohydrates besides glycolysis. The main function of this enzyme is to provide reducing power (NADPH) and pentose phosphates for fatty acid and nucleic acid synthesis. This is Glucose-6-phosphate 1-dehydrogenase from Cyberlindnera jadinii (Torula yeast).